A 403-amino-acid chain; its full sequence is Phosphoglycerate kinase (403 aa).

Substrate is bound by residues 24-26 (DLN), Arg-39, 62-65 (HLGR), Arg-121, and Arg-161. Residues Lys-211, Gly-299, Glu-330, and 359 to 362 (GGDS) each bind ATP.

Belongs to the phosphoglycerate kinase family. As to quaternary structure, monomer.

It localises to the cytoplasm. The catalysed reaction is (2R)-3-phosphoglycerate + ATP = (2R)-3-phospho-glyceroyl phosphate + ADP. It functions in the pathway carbohydrate degradation; glycolysis; pyruvate from D-glyceraldehyde 3-phosphate: step 2/5. The sequence is that of Phosphoglycerate kinase from Rhodococcus jostii (strain RHA1).